Here is a 710-residue protein sequence, read N- to C-terminus: Serine/threonine-protein phosphatase PP-Z2 (710 aa).

The disordered stretch occupies residues 1–382 (MGNSGSKQHT…ADGDNGSRTN (382 aa)). Gly-2 is lipidated: N-myristoyl glycine. A compositionally biased stretch (basic and acidic residues) spans 15–27 (KKDDHDGDRKKTL). The segment covering 40-49 (SLKSSRSLRS) has biased composition (low complexity). Residues Ser-55 and Ser-71 each carry the phosphoserine modification. 2 stretches are compositionally biased toward polar residues: residues 62 to 77 (NVQAQTQPLSRRSSTL) and 95 to 104 (PNNHYLTSHP). 2 stretches are compositionally biased toward low complexity: residues 105–125 (SSSRRLSSSSRRSSMGNNNNS) and 143–155 (NSTSMHSTSSFNS). Over residues 160 to 172 (LTDDDDDRGDDGG) the composition is skewed to acidic residues. Phosphothreonine is present on Thr-161. Residues Ser-203 and Ser-224 each carry the phosphoserine modification. Low complexity predominate over residues 247-260 (SNRSNSHASSRKSS). Residues 261-273 (FGSTGNTAYSTPL) show a composition bias toward polar residues. The residue at position 271 (Thr-271) is a Phosphothreonine. Ser-275 carries the phosphoserine modification. The span at 291–302 (DNVNGRGTSPIP) shows a compositional bias: polar residues. Ser-310 is subject to Phosphoserine. Residues Asp-454, His-456, Asp-482, and Asn-514 each coordinate Mn(2+). The active-site Proton donor is His-515. His-563 and His-638 together coordinate Mn(2+).

Belongs to the PPP phosphatase family. PP-Z subfamily. The cofactor is Mn(2+).

It carries out the reaction O-phospho-L-seryl-[protein] + H2O = L-seryl-[protein] + phosphate. It catalyses the reaction O-phospho-L-threonyl-[protein] + H2O = L-threonyl-[protein] + phosphate. In terms of biological role, essential for the maintenance of cell size and integrity in response to osmotic stress. The chain is Serine/threonine-protein phosphatase PP-Z2 (PPZ2) from Saccharomyces cerevisiae (strain ATCC 204508 / S288c) (Baker's yeast).